The primary structure comprises 128 residues: uncharacterized protein (128 aa).

It belongs to the HesB/IscA family.

This is an uncharacterized protein from Buchnera aphidicola subsp. Baizongia pistaciae (strain Bp).